A 257-amino-acid chain; its full sequence is Imidazole glycerol phosphate synthase subunit HisF (257 aa).

Residues aspartate 11 and aspartate 130 contribute to the active site.

It belongs to the HisA/HisF family. In terms of assembly, heterodimer of HisH and HisF.

Its subcellular location is the cytoplasm. The catalysed reaction is 5-[(5-phospho-1-deoxy-D-ribulos-1-ylimino)methylamino]-1-(5-phospho-beta-D-ribosyl)imidazole-4-carboxamide + L-glutamine = D-erythro-1-(imidazol-4-yl)glycerol 3-phosphate + 5-amino-1-(5-phospho-beta-D-ribosyl)imidazole-4-carboxamide + L-glutamate + H(+). It participates in amino-acid biosynthesis; L-histidine biosynthesis; L-histidine from 5-phospho-alpha-D-ribose 1-diphosphate: step 5/9. In terms of biological role, IGPS catalyzes the conversion of PRFAR and glutamine to IGP, AICAR and glutamate. The HisF subunit catalyzes the cyclization activity that produces IGP and AICAR from PRFAR using the ammonia provided by the HisH subunit. This is Imidazole glycerol phosphate synthase subunit HisF from Shewanella woodyi (strain ATCC 51908 / MS32).